Here is a 1013-residue protein sequence, read N- to C-terminus: Nucleotide-binding oligomerization domain-containing protein 2 (1013 aa).

CARD domains are found at residues M1–E82 and L107–K178. Residues W36–V50 carry the ATG16L1-binding motif motif. Positions 212, 225, 226, 275, 276, 277, 278, 279, and 280 each coordinate ADP. A required for CARD9 binding region spans residues D214–A247. An NACHT domain is found at D266–A402. Residue G272–S279 participates in ATP binding. Residue C368 is the site of S-palmitoyl cysteine attachment. Position 576 (H576) interacts with ADP. LRR repeat units follow at residues R764–P785, A789–A812, Q817–Q838, N845–T857, S873–A893, S901–S922, A929–A949, S957–Q978, and T985–S1005.

The protein belongs to the NOD1-NOD2 family. In terms of assembly, homooligomer: homooligomerizes following muramyl dipeptide (MDP)-binding, promoting RIPK2 recruitment. Interacts (via CARD domain) with RIPK2 (via CARD domain). Following RIPK2 recruitment, RIPK2 homooligomerizes via its CARD domain and forms long filaments named RIPosomes. Interacts (via CARD domain) with ubiquitin; inhibiting interaction with RIPK2. Component of a signaling complex consisting of ARHGEF2, NOD2 and RIPK2. Interacts with ANKRD17 (via N-terminus). Interacts with HSPA1A; the interaction enhances NOD2 stability. Interacts (via both CARD domains) with HSP90; the interaction enhances NOD2 stability. Interacts (via CARD domain) with SOCS3; the interaction promotes NOD2 degradation. Interacts (via CARD domain) with ERBIN; the interaction inhibits activation of NOD2. Interacts with MAPKBP1; the interaction is enhanced in the presence of muramyl dipeptide (MDP) and inhibits NOD2 homooligomerization and activation. Interacts with INAVA; the interaction takes place upon Pattern recognition receptor (PRR) stimulation. Interacts (via NACHT domain) with CARD9. Interacts (via CARD domain) with CASP1; this interaction leads to IL1B processing. Also interacts with CASP4. Interacts with NLRP1; this interaction is enhanced in the presence of muramyl dipeptide (MDP) and leads to increased IL1B release. Interacts with NLRP12; this interaction promotes degradation of NOD2 through the ubiquitin-proteasome pathway. Interacts with ANKHD1, C10orf67, CHMP5, DOCK7, ENTR1, KRT15, LDOC1, PPP1R12C, PPP2R3B, TRIM41 and VIM. Interacts with MAVS; interaction takes place following single-stranded RNA (ssRNA)-binding. Interacts with ATG16L1. Interacts with IRGM; promoting IRGM 'Lys-63'-linked polyubiquitination, which is required for interactions with the core autophagy factors. Post-translationally, palmitoylated by ZDHHC5; palmitoylation is required for proper recruitment to the bacterial entry site and hence for proper signaling upon cognate peptidoglycan detection. Palmitoylation promotes localization to the cell membrane. Palmitoylation protects from SQSTM1/p62-dependent autophagic degradation. Polyubiquitinated by TRIM27, leading to proteasome-mediated degradation. Polyubiquitinated and degraded following muramyl dipeptide (MDP) stimulation, conferring MDP tolerance and preventing septic shock. In terms of processing, degraded via selective autophagy following interaction with IRGM. IRGM promotes NOD2-RIPK2 RIPosome recruitment to autophagosome membranes, promoting their SQSTM1/p62-dependent autophagic degradation. Post-translationally, O-glycosylated by OGT, O-GlcNAcylation increases protein stability.

It is found in the cell membrane. The protein localises to the basolateral cell membrane. Its subcellular location is the cytoplasm. It localises to the mitochondrion. With respect to regulation, ADP-binding promotes an inactive closed conformation. In terms of biological role, pattern recognition receptor (PRR) that detects bacterial peptidoglycan fragments and other danger signals and plays an important role in gastrointestinal immunity. Specifically activated by muramyl dipeptide (MDP), a fragment of bacterial peptidoglycan found in every bacterial peptidoglycan type. NOD2 specifically recognizes and binds 6-O-phospho-MDP, the phosphorylated form of MDP, which is generated by NAGK. 6-O-phospho-MDP-binding triggers oligomerization that facilitates the binding and subsequent activation of the proximal adapter receptor-interacting RIPK2. Following recruitment, RIPK2 undergoes 'Met-1'- (linear) and 'Lys-63'-linked polyubiquitination by E3 ubiquitin-protein ligases XIAP, BIRC2, BIRC3 and the LUBAC complex, becoming a scaffolding protein for downstream effectors, triggering activation of the NF-kappa-B and MAP kinases signaling. This in turn leads to the transcriptional activation of hundreds of genes involved in immune response. Its ability to detect bacterial MDP plays a central role in maintaining the equilibrium between intestinal microbiota and host immune responses to control inflammation. An imbalance in this relationship results in dysbiosis, whereby pathogenic bacteria prevail on commensals, causing damage in the intestinal epithelial barrier as well as allowing bacterial invasion and inflammation. Acts as a regulator of appetite by sensing MDP in a subset of brain neurons: microbiota-derived MDP reach the brain, where they bind and activate NOD2 in inhibitory hypothalamic neurons, decreasing neuronal activity, thereby regulating satiety and body temperature. NOD2-dependent MDP-sensing of bacterial cell walls in the intestinal epithelial compartment contributes to sustained postnatal growth upon undernutrition. Also plays a role in antiviral response by acting as a sensor of single-stranded RNA (ssRNA) from viruses: upon ssRNA-binding, interacts with MAVS, leading to activation of interferon regulatory factor-3/IRF3 and expression of type I interferon. Also acts as a regulator of autophagy in dendritic cells via its interaction with ATG16L1, possibly by recruiting ATG16L1 at the site of bacterial entry. NOD2 activation in the small intestine crypt also contributes to intestinal stem cells survival and function: acts by promoting mitophagy via its association with ATG16L1. In addition to its main role in innate immunity, also regulates the adaptive immune system by acting as regulator of helper T-cell and regulatory T-cells (Tregs). Besides recognizing pathogens, also involved in the endoplasmic reticulum stress response: acts by sensing and binding to the cytosolic metabolite sphingosine-1-phosphate generated in response to endoplasmic reticulum stress, initiating an inflammation process that leads to activation of the NF-kappa-B and MAP kinases signaling. May also be involved in NLRP1 activation following activation by MDP, leading to CASP1 activation and IL1B release in macrophages. In Oryctolagus cuniculus (Rabbit), this protein is Nucleotide-binding oligomerization domain-containing protein 2.